A 423-amino-acid chain; its full sequence is Imidazolonepropionase (423 aa).

Residues His78 and His80 each contribute to the Fe(3+) site. Residues His78 and His80 each contribute to the Zn(2+) site. 4-imidazolone-5-propanoate contacts are provided by Arg87, Tyr150, and His183. N-formimidoyl-L-glutamate is bound at residue Tyr150. His247 is a Fe(3+) binding site. His247 contacts Zn(2+). Glu250 is a binding site for 4-imidazolone-5-propanoate. Asp322 is a Fe(3+) binding site. A Zn(2+)-binding site is contributed by Asp322. N-formimidoyl-L-glutamate contacts are provided by Asn324 and Gly326. Ser327 lines the 4-imidazolone-5-propanoate pocket.

Belongs to the metallo-dependent hydrolases superfamily. HutI family. Requires Zn(2+) as cofactor. The cofactor is Fe(3+).

Its subcellular location is the cytoplasm. It carries out the reaction 4-imidazolone-5-propanoate + H2O = N-formimidoyl-L-glutamate. Its pathway is amino-acid degradation; L-histidine degradation into L-glutamate; N-formimidoyl-L-glutamate from L-histidine: step 3/3. Its function is as follows. Catalyzes the hydrolytic cleavage of the carbon-nitrogen bond in imidazolone-5-propanoate to yield N-formimidoyl-L-glutamate. It is the third step in the universal histidine degradation pathway. This chain is Imidazolonepropionase, found in Bacillus cereus (strain B4264).